Reading from the N-terminus, the 357-residue chain is Phospho-N-acetylmuramoyl-pentapeptide-transferase (357 aa).

Helical transmembrane passes span 23 to 43 (AIFSLLTSFFINLYIGPYFIY), 70 to 90 (TMGGIFIIFSILFSTILYCNL), 91 to 111 (SNIYIWYVISILIGYGLIGFI), 127 to 147 (LKWKYFFLSIIAFIFICMIKI), 171 to 191 (YLYIFLSYFVLVGTSNAVNLT), 196 to 216 (GLAIMPVIFLTCGLTLISLFS), 236 to 256 (LAILCMAIVGSGLGFLWFNSY), 260 to 280 (VFMGDVGSLALGGSLGAIAIL), 286 to 306 (LLIIMGGIFVFETISVILQII), and 334 to 354 (LIIVRFWIVSLILLLISLISL).

Belongs to the glycosyltransferase 4 family. MraY subfamily. Mg(2+) is required as a cofactor.

Its subcellular location is the cell inner membrane. It catalyses the reaction UDP-N-acetyl-alpha-D-muramoyl-L-alanyl-gamma-D-glutamyl-meso-2,6-diaminopimeloyl-D-alanyl-D-alanine + di-trans,octa-cis-undecaprenyl phosphate = di-trans,octa-cis-undecaprenyl diphospho-N-acetyl-alpha-D-muramoyl-L-alanyl-D-glutamyl-meso-2,6-diaminopimeloyl-D-alanyl-D-alanine + UMP. The protein operates within cell wall biogenesis; peptidoglycan biosynthesis. Its function is as follows. Catalyzes the initial step of the lipid cycle reactions in the biosynthesis of the cell wall peptidoglycan: transfers peptidoglycan precursor phospho-MurNAc-pentapeptide from UDP-MurNAc-pentapeptide onto the lipid carrier undecaprenyl phosphate, yielding undecaprenyl-pyrophosphoryl-MurNAc-pentapeptide, known as lipid I. This chain is Phospho-N-acetylmuramoyl-pentapeptide-transferase, found in Buchnera aphidicola subsp. Acyrthosiphon pisum (strain APS) (Acyrthosiphon pisum symbiotic bacterium).